We begin with the raw amino-acid sequence, 792 residues long: Cis-abienol synthase, chloroplastic (792 aa).

The N-terminal 37 residues, 1–37 (MVLGLRSKIIPLPDHKLGNIKLGSVTNAICHRPCRVR), are a transit peptide targeting the chloroplast. Mg(2+)-binding residues include aspartate 539, aspartate 543, asparagine 684, and glutamate 692. The DDXXD motif signature appears at 539–543 (DDFFD).

It belongs to the terpene synthase family. It depends on Mg(2+) as a cofactor. Expressed specifically in trichomes.

The protein localises to the plastid. The protein resides in the chloroplast. The catalysed reaction is 8-hydroxycopalyl diphosphate = cis-abienol + diphosphate. It participates in secondary metabolite biosynthesis; terpenoid biosynthesis. In terms of biological role, involved in the biosynthesis of cis-abienol, a labdane diterpene that can be used as synthesis precursor of ambergris substitution fragance products. The sequence is that of Cis-abienol synthase, chloroplastic from Nicotiana tabacum (Common tobacco).